The following is a 233-amino-acid chain: 7-cyano-7-deazaguanine synthase (233 aa).

Residue 7–17 participates in ATP binding; that stretch reads CSGGLDSVSLA. Zn(2+) is bound by residues Cys-185, Cys-193, Cys-196, and Cys-199.

It belongs to the QueC family. Zn(2+) is required as a cofactor.

The enzyme catalyses 7-carboxy-7-deazaguanine + NH4(+) + ATP = 7-cyano-7-deazaguanine + ADP + phosphate + H2O + H(+). It participates in purine metabolism; 7-cyano-7-deazaguanine biosynthesis. Its function is as follows. Catalyzes the ATP-dependent conversion of 7-carboxy-7-deazaguanine (CDG) to 7-cyano-7-deazaguanine (preQ(0)). In Ruegeria sp. (strain TM1040) (Silicibacter sp.), this protein is 7-cyano-7-deazaguanine synthase.